The following is a 311-amino-acid chain: Sulfate adenylyltransferase subunit 2 (311 aa).

This sequence belongs to the PAPS reductase family. CysD subfamily. In terms of assembly, heterodimer composed of CysD, the smaller subunit, and CysN.

It catalyses the reaction sulfate + ATP + H(+) = adenosine 5'-phosphosulfate + diphosphate. The protein operates within sulfur metabolism; hydrogen sulfide biosynthesis; sulfite from sulfate: step 1/3. Functionally, with CysN forms the ATP sulfurylase (ATPS) that catalyzes the adenylation of sulfate producing adenosine 5'-phosphosulfate (APS) and diphosphate, the first enzymatic step in sulfur assimilation pathway. APS synthesis involves the formation of a high-energy phosphoric-sulfuric acid anhydride bond driven by GTP hydrolysis by CysN coupled to ATP hydrolysis by CysD. In Caulobacter vibrioides (strain ATCC 19089 / CIP 103742 / CB 15) (Caulobacter crescentus), this protein is Sulfate adenylyltransferase subunit 2.